We begin with the raw amino-acid sequence, 314 residues long: 4-hydroxy-3-methylbut-2-enyl diphosphate reductase (314 aa).

Cys12 lines the [4Fe-4S] cluster pocket. 2 residues coordinate (2E)-4-hydroxy-3-methylbut-2-enyl diphosphate: His41 and His74. The dimethylallyl diphosphate site is built by His41 and His74. His41 and His74 together coordinate isopentenyl diphosphate. Residue Cys96 coordinates [4Fe-4S] cluster. His124 lines the (2E)-4-hydroxy-3-methylbut-2-enyl diphosphate pocket. Position 124 (His124) interacts with dimethylallyl diphosphate. Residue His124 participates in isopentenyl diphosphate binding. Glu126 acts as the Proton donor in catalysis. Thr167 lines the (2E)-4-hydroxy-3-methylbut-2-enyl diphosphate pocket. Cys197 lines the [4Fe-4S] cluster pocket. 4 residues coordinate (2E)-4-hydroxy-3-methylbut-2-enyl diphosphate: Ser225, Ser226, Asn227, and Ser269. Positions 225, 226, 227, and 269 each coordinate dimethylallyl diphosphate. Isopentenyl diphosphate contacts are provided by Ser225, Ser226, Asn227, and Ser269.

It belongs to the IspH family. It depends on [4Fe-4S] cluster as a cofactor.

The catalysed reaction is isopentenyl diphosphate + 2 oxidized [2Fe-2S]-[ferredoxin] + H2O = (2E)-4-hydroxy-3-methylbut-2-enyl diphosphate + 2 reduced [2Fe-2S]-[ferredoxin] + 2 H(+). It catalyses the reaction dimethylallyl diphosphate + 2 oxidized [2Fe-2S]-[ferredoxin] + H2O = (2E)-4-hydroxy-3-methylbut-2-enyl diphosphate + 2 reduced [2Fe-2S]-[ferredoxin] + 2 H(+). Its pathway is isoprenoid biosynthesis; dimethylallyl diphosphate biosynthesis; dimethylallyl diphosphate from (2E)-4-hydroxy-3-methylbutenyl diphosphate: step 1/1. The protein operates within isoprenoid biosynthesis; isopentenyl diphosphate biosynthesis via DXP pathway; isopentenyl diphosphate from 1-deoxy-D-xylulose 5-phosphate: step 6/6. In terms of biological role, catalyzes the conversion of 1-hydroxy-2-methyl-2-(E)-butenyl 4-diphosphate (HMBPP) into a mixture of isopentenyl diphosphate (IPP) and dimethylallyl diphosphate (DMAPP). Acts in the terminal step of the DOXP/MEP pathway for isoprenoid precursor biosynthesis. The sequence is that of 4-hydroxy-3-methylbut-2-enyl diphosphate reductase from Actinobacillus pleuropneumoniae serotype 3 (strain JL03).